The primary structure comprises 268 residues: Thiazole synthase (268 aa).

Lysine 108 acts as the Schiff-base intermediate with DXP in catalysis. 1-deoxy-D-xylulose 5-phosphate is bound by residues glycine 169, 195-196 (AG), and 217-218 (NS). A disordered region spans residues 248–268 (RLKENPLASPSSPLDGVISNN). The segment covering 255-268 (ASPSSPLDGVISNN) has biased composition (polar residues).

Belongs to the ThiG family. In terms of assembly, homotetramer. Forms heterodimers with either ThiH or ThiS.

Its subcellular location is the cytoplasm. The catalysed reaction is [ThiS sulfur-carrier protein]-C-terminal-Gly-aminoethanethioate + 2-iminoacetate + 1-deoxy-D-xylulose 5-phosphate = [ThiS sulfur-carrier protein]-C-terminal Gly-Gly + 2-[(2R,5Z)-2-carboxy-4-methylthiazol-5(2H)-ylidene]ethyl phosphate + 2 H2O + H(+). It participates in cofactor biosynthesis; thiamine diphosphate biosynthesis. Functionally, catalyzes the rearrangement of 1-deoxy-D-xylulose 5-phosphate (DXP) to produce the thiazole phosphate moiety of thiamine. Sulfur is provided by the thiocarboxylate moiety of the carrier protein ThiS. In vitro, sulfur can be provided by H(2)S. The sequence is that of Thiazole synthase from Prochlorococcus marinus (strain NATL2A).